Consider the following 155-residue polypeptide: Small ribosomal subunit protein uS7c (155 aa).

Belongs to the universal ribosomal protein uS7 family. Part of the 30S ribosomal subunit.

It is found in the plastid. The protein resides in the chloroplast. In terms of biological role, one of the primary rRNA binding proteins, it binds directly to 16S rRNA where it nucleates assembly of the head domain of the 30S subunit. The protein is Small ribosomal subunit protein uS7c (rps7) of Saruma henryi (Upright wild ginger).